We begin with the raw amino-acid sequence, 909 residues long: Short transient receptor potential channel 3 (909 aa).

The tract at residues 1–92 (MSTKVKKCRE…VRGPAFMFGA (92 aa)) is disordered. The Cytoplasmic portion of the chain corresponds to 1–447 (MSTKVKKCRE…KILRSPFMKF (447 aa)). Acidic residues predominate over residues 19–28 (PEEEDGEAEG). A compositionally biased stretch (pro residues) spans 47-57 (PPCPRAPPSPG). Low complexity predominate over residues 58–67 (PDASSEGSPS). ANK repeat units lie at residues 99–128 (AEEE…TLNV), 134–163 (MGQN…LARI), 165–191 (DALL…FAAS), and 220–249 (PDIT…RIER). E146 contacts Ca(2+). The helical transmembrane segment at 448–465 (VAHAASFIIFLGLLVFNA) threads the bilayer. Residues 466–496 (SDRFEGITTLPNITVIDYPKQIFRVKTTQFT) lie on the Extracellular side of the membrane. The N-linked (GlcNAc...) asparagine glycan is linked to N477. A helical transmembrane segment spans residues 497-515 (WTEMLIMVWVLGMMWSECK). Residues E513, E516, and N531 each contribute to the Ca(2+) site. The Cytoplasmic portion of the chain corresponds to 516–528 (ELWLEGPREYIVQ). A helical membrane pass occupies residues 529-550 (LWNVLDFGMLSIFIAAFTARFL). Over 551-594 (AFLQATKAQQYVDSHVQESDLSEVTLPPEVQYFTYARDKWLPSD) the chain is Extracellular. Residues 595-618 (PQIISEGLYAIAVVLSFSRIAYIL) form a helical membrane-spanning segment. The Cytoplasmic portion of the chain corresponds to 619 to 637 (PANESFGPLQISLGRTVKD). An ANK 5 repeat occupies 622–651 (ESFGPLQISLGRTVKDIFKFMVLFIMVFLA). Residues 638 to 661 (IFKFMVLFIMVFLAFMIGMFILYS) traverse the membrane as a helical segment. Residues 662-701 (YYLGAKVNPAFTTVEESFKTLFWSIFGLSEVTSVVLKYDH) are Extracellular-facing. The chain crosses the membrane as a helical span at residues 702 to 727 (KFIENIGYVLYGIYNVTMVVVLLNML). Residues 728–909 (IAMINSSYQE…KLNPSALRCE (182 aa)) are Cytoplasmic-facing. Ca(2+) contacts are provided by E859, E862, E864, and D871.

This sequence belongs to the transient receptor (TC 1.A.4) family. STrpC subfamily. TRPC3 sub-subfamily. As to quaternary structure, homotetramer. Interacts with ITPR1, ITPR3, MX1 and RNF24. Interacts with JPH2; the interaction is involved in maintaining Ca(2+) homeostasis in skeletal muscle and is mediated by JPH2 'Ser-165' phosphorylation.

It localises to the cell membrane. The enzyme catalyses Ca(2+)(in) = Ca(2+)(out). Activated by diacylglycerol (DAG) in a membrane-delimited fashion, independently of protein kinase C. Activated by inositol 1,4,5-triphosphate receptors (ITPR) with bound IP3. May be activated by internal calcium store depletion. Inhibited by intracellular Ca(2+). Forms a receptor-activated non-selective calcium permeant cation channel. May be operated by a phosphatidylinositol second messenger system activated by receptor tyrosine kinases or G-protein coupled receptors. The sequence is that of Short transient receptor potential channel 3 (Trpc3) from Rattus norvegicus (Rat).